The chain runs to 434 residues: Tryptophan--tRNA ligase (434 aa).

Residues 14 to 16 (TTS) and 22 to 23 (GN) each bind ATP. The 'HIGH' region motif lies at 15–23 (TSGTPHLGN). Residue D147 coordinates L-tryptophan. Residues 159-161 (GRD), L199, and 206-210 (KMSKS) contribute to the ATP site. Positions 206–210 (KMSKS) match the 'KMSKS' region motif.

The protein belongs to the class-I aminoacyl-tRNA synthetase family. As to quaternary structure, homodimer.

It is found in the cytoplasm. The catalysed reaction is tRNA(Trp) + L-tryptophan + ATP = L-tryptophyl-tRNA(Trp) + AMP + diphosphate + H(+). Catalyzes the attachment of tryptophan to tRNA(Trp). This chain is Tryptophan--tRNA ligase, found in Xylella fastidiosa (strain 9a5c).